We begin with the raw amino-acid sequence, 1881 residues long: MPYSVGFREADAATSFLRAARSGNLDKALDHLRNGVDINTCNQNGLNGLHLASKEGHVKMVVELLHKEIILETTTKKGNTALHIAALAGQDEVVRELVNYGANVNAQSQKGFTPLYMAAQENHLEVVKFLLENGANQNVATEDGFTPLAVALQQGHENVVAHLINYGTKGKVRLPALHIAARNDDTRTAAVLLQNDPNPDVLSKTGFTPLHIAAHYENLNVAQLLLNRGASVNFTPQNGITPLHIASRRGNVIMVRLLLDRGAQIETKTKDELTPLHCAARNGHVRISEILLDHGAPIQAKTKNGLSPIHMAAQGDHLDCVRLLLQYDAEIDDITLDHLTPLHVAAHCGHHRVAKVLLDKGAKPNSRALNGFTPLHIACKKNHVRVMELLLKTGASIDAVTESGLTPLHVASFMGHLPIVKNLLQRGASPNVSNVKVETPLHMAARAGHTEVAKYLLQNKAKVNAKAKDDQTPLHCAARIGHTNMVKLLLENNANPNLATTAGHTPLHIAAREGHVETVLALLEKEASQACMTKKGFTPLHVAAKYGKVRVAELLLERDAHPNAAGKNGLTPLHVAVHHNNLDIVKLLLPRGGSPHSPAWNGYTPLHIAAKQNQVEVARSLLQYGGSANAESVQGVTPLHLAAQEGHAEMVALLLSKQANGNLGNKSGLTPLHLVAQEGHVPVADVLIKHGVMVDATTRMGYTPLHVASHYGNIKLVKFLLQHQADVNAKTKLGYSPLHQAAQQGHTDIVTLLLKNGASPNEVSSDGTTPLAIAKRLGYISVTDVLKVVTDETSFVLVSDKHRMSFPETVDEILDVSEDEGEELISFKAERRDSRDVDEEKELLDFVPKLDQVVESPAIPRIPCAMPETVVIRSEEQEQASKEYDEDSLIPSSPATETSDNISPVASPVHTGFLVSFMVDARGGSMRGSRHNGLRVVIPPRTCAAPTRITCRLVKPQKLSTPPPLAEEEGLASRIIALGPTGAQFLSPVIVEIPHFASHGRGDRELVVLRSENGSVWKEHRSRYGESYLDQILNGMDEELGSLEELEKKRVCRIITTDFPLYFVIMSRLCQDYDTIGPEGGSLKSKLVPLVQATFPENAVTKRVKLALQAQPVPDELVTKLLGNQATFSPIVTVEPRRRKFHRPIGLRIPLPPSWTDNPRDSGEGDTTSLRLLCSVIGGTDQAQWEDITGTTKLVYANECANFTTNVSARFWLSDCPRTAEAVNFATLLYKELTAVPYMAKFVIFAKMNDPREGRLRCYCMTDDKVDKTLEQHENFVEVARSRDIEVLEGMSLFAELSGNLVPVKKAAQQRSFHFQSFRENRLAMPVKVRDSSREPGGSLSFLRKAMKYEDTQHILCHLNITMPPCAKGSGAEDRRRTPTPLALRYSILSESTPGSLSGTEQAEMKMAVISEHLGLSWAELARELQFSVEDINRIRVENPNSLLEQSVALLNLWVIREGQNANMENLYTALQSIDRGEIVNMLEGSGRQSRNLKPDRRHTDRDYSLSPSQMNGYSSLQDELLSPASLGCALSSPLRADQYWNEVAVLDAIPLAATEHDTMLEMSDMQVWSAGLTPSLVTAEDSSLECSKAEDSDATGHEWKLEGALSEEPRGPELGSLELVEDDTVDSDATNGLIDLLEQEEGQRSEEKLPGSKRQDDATGAGQDSENEVSLVSGHQRGQARITHSPTVSQVTERSQDRLQDWDADGSIVSYLQDAAQGSWQEEVTQGPHSFQGTSTMTEGLEPGGSQEYEKVLVSVSEHTWTEQPEAESSQADRDRRQQGQEEQVQEAKNTFTQVVQGNEFQNIPGEQVTEEQFTDEQGNIVTKKIIRKVVRQIDLSSADAAQEHEEVTVEGPLEDPSELEVDIDYFMKHSKDHTSTPNP.

Positions 1–827 are 89 kDa domain; it reads MPYSVGFREA…EDEGEELISF (827 aa). 23 ANK repeats span residues 44–73, 77–106, 110–139, 143–172, 174–201, 205–234, 238–267, 271–300, 304–333, 337–366, 370–399, 403–432, 436–465, 469–498, 502–531, 535–564, 568–597, 601–630, 634–663, 667–696, 700–729, 733–762, and 766–795; these read NGLNGLHLASKEGHVKMVVELLHKEIILET, KGNTALHIAALAGQDEVVRELVNYGANVNA, KGFTPLYMAAQENHLEVVKFLLENGANQNV, DGFTPLAVALQQGHENVVAHLINYGTKGKV, LPALHIAARNDDTRTAAVLLQNDPNPDV, TGFTPLHIAAHYENLNVAQLLLNRGASVNF, NGITPLHIASRRGNVIMVRLLLDRGAQIET, DELTPLHCAARNGHVRISEILLDHGAPIQA, NGLSPIHMAAQGDHLDCVRLLLQYDAEIDD, DHLTPLHVAAHCGHHRVAKVLLDKGAKPNS, NGFTPLHIACKKNHVRVMELLLKTGASIDA, SGLTPLHVASFMGHLPIVKNLLQRGASPNV, KVETPLHMAARAGHTEVAKYLLQNKAKVNA, DDQTPLHCAARIGHTNMVKLLLENNANPNL, AGHTPLHIAAREGHVETVLALLEKEASQAC, KGFTPLHVAAKYGKVRVAELLLERDAHPNA, NGLTPLHVAVHHNNLDIVKLLLPRGGSPHS, NGYTPLHIAAKQNQVEVARSLLQYGGSANA, QGVTPLHLAAQEGHAEMVALLLSKQANGNL, SGLTPLHLVAQEGHVPVADVLIKHGVMVDA, MGYTPLHVASHYGNIKLVKFLLQHQADVNA, LGYSPLHQAAQQGHTDIVTLLLKNGASPNE, and DGTTPLAIAKRLGYISVTDVLKVVTDETSF. Residue N105 is modified to (3S)-3-hydroxyasparagine; by HIF1AN; partial. N233 carries the post-translational modification (3S)-3-hydroxyasparagine; by HIF1AN; partial. Position 429 is a phosphoserine (S429). N431 and N464 each carry (3S)-3-hydroxyasparagine; by HIF1AN; partial. Residues N629 and N662 each carry the (3S)-3-hydroxyasparagine; by HIF1AN; partial modification. The residue at position 695 (D695) is a (3S)-3-hydroxyaspartate; by HIF1AN; partial. Residue N728 is modified to (3S)-3-hydroxyasparagine; by HIF1AN; partial. At S759 the chain carries Phosphoserine. The residue at position 761 (N761) is a (3S)-3-hydroxyasparagine; by HIF1AN; partial. Residues S781, S817, S834, and S856 each carry the phosphoserine modification. Positions 875–904 are disordered; it reads EEQEQASKEYDEDSLIPSSPATETSDNISP. The segment covering 890-904 has biased composition (polar residues); it reads IPSSPATETSDNISP. ZU5 domains follow at residues 913–1068 and 1070–1216; these read FLVS…IMSR and CQDY…LSDC. A Phosphothreonine modification is found at T961. A Phosphotyrosine modification is found at Y1073. Position 1082 is a phosphoserine (S1082). Residues 1234–1362 form a UPA domain region; it reads TAVPYMAKFV…QHILCHLNIT (129 aa). Phosphothreonine is present on residues T1378 and T1380. The tract at residues 1383-1881 is 55 kDa regulatory domain; that stretch reads ALRYSILSES…SKDHTSTPNP (499 aa). Phosphoserine occurs at positions 1390, 1392, and 1396. T1400 carries the phosphothreonine modification. A Death domain is found at 1403–1487; the sequence is AEMKMAVISE…EIVNMLEGSG (85 aa). S1428 and S1486 each carry phosphoserine. Residues 1486–1510 form a disordered region; it reads SGRQSRNLKPDRRHTDRDYSLSPSQ. Basic and acidic residues predominate over residues 1493-1504; it reads LKPDRRHTDRDY. S1523 and S1533 each carry phosphoserine. The interval 1583–1613 is disordered; sequence SSLECSKAEDSDATGHEWKLEGALSEEPRGP. The segment covering 1588–1612 has biased composition (basic and acidic residues); the sequence is SKAEDSDATGHEWKLEGALSEEPRG. S1617 is modified (phosphoserine). 3 disordered regions span residues 1637 to 1703, 1718 to 1791, and 1840 to 1859; these read LLEQ…LQDW, QGSW…EAKN, and ADAAQEHEEVTVEGPLEDPS. Residues 1642–1658 show a composition bias toward basic and acidic residues; that stretch reads EGQRSEEKLPGSKRQDD. A phosphoserine mark is found at S1666, S1671, S1686, S1690, and S1696. Residues 1683–1694 are compositionally biased toward polar residues; sequence ITHSPTVSQVTE. Polar residues-rich tracts occupy residues 1718 to 1739 and 1758 to 1771; these read QGSWQEEVTQGPHSFQGTSTMT and SEHTWTEQPEAESS. Positions 1772-1781 are enriched in basic and acidic residues; the sequence is QADRDRRQQG.

In terms of assembly, component of the ankyrin-1 complex in the erythrocyte, composed of ANK1, RHCE, RHAG, SLC4A1, EPB42, GYPA, GYPB and AQP1. Interacts with a number of integral membrane proteins and cytoskeletal proteins. Interacts (via N-terminus) with SPTB/spectrin (beta chain). Also interacts with TTN/titin. Isoform Mu17 interacts with OBSCN isoform 3/obscurin. Interacts with HIF1AN. Interacts (via ANK 1-5 repeats) with RHCE; this interaction mediates the primary membrane attachment site for ANK1. Interacts (via ANK 1-2 repeats) with AQP1 (via the N-terminal). Interacts (via ANK 1-13 repeats) with EPB42. Interacts directly with SLC4A1 (via the cytoplasmic domain); this interaction is mediated by the SLC4A1 Band 3-II and Band 3-III dimers. In terms of processing, regulated by phosphorylation. Post-translationally, palmitoylated. Hydroxylated by HIF1AN at several asparagine and 1 aspartate residue within ANK repeat region. Hydroxylation seems to increase the conformational stability of this region and may also modulate protein-protein interactions mediated by the ANK repeat region. In terms of processing, (Microbial infection) Probably cleaved by P.falciparum SERA6; the cleavage probably causes the disruption of the actin cytoskeleton and the rupture of the erythrocyte cell membrane releasing the merozoites. In terms of tissue distribution, isoform Mu17, isoform Mu18, isoform Mu19 and isoform Mu20 are expressed in skeletal muscle. Isoform Br21 is expressed in brain.

It is found in the cytoplasm. The protein localises to the cytoskeleton. Its subcellular location is the membrane. It localises to the myofibril. The protein resides in the sarcomere. It is found in the m line. The protein localises to the sarcoplasmic reticulum. In terms of biological role, component of the ankyrin-1 complex, a multiprotein complex involved in the stability and shape of the erythrocyte membrane. Attaches integral membrane proteins to cytoskeletal elements; binds to the erythrocyte membrane protein band 4.2, to Na-K ATPase, to the lymphocyte membrane protein GP85, and to the cytoskeletal proteins fodrin, tubulin, vimentin and desmin. Erythrocyte ankyrins also link spectrin (beta chain) to the cytoplasmic domain of the erythrocytes anion exchange protein; they retain most or all of these binding functions. Its function is as follows. Together with obscurin in skeletal muscle may provide a molecular link between the sarcoplasmic reticulum and myofibrils. The chain is Ankyrin-1 from Homo sapiens (Human).